Consider the following 154-residue polypeptide: Ribosome maturation factor RimP (154 aa).

It belongs to the RimP family.

It is found in the cytoplasm. Required for maturation of 30S ribosomal subunits. This is Ribosome maturation factor RimP from Ruthia magnifica subsp. Calyptogena magnifica.